The sequence spans 386 residues: WD repeat-containing protein 89 (386 aa).

WD repeat units follow at residues 21-65 (KEPT…LLRE), 68-107 (GSPG…EKPA), 112-156 (GYPS…QDLS), 167-207 (THSD…EEDA), 213-253 (NSVS…TDEP), and 318-357 (GHAA…KTFT).

This chain is WD repeat-containing protein 89 (Wdr89), found in Rattus norvegicus (Rat).